The primary structure comprises 392 residues: Alpha-(1,3)-fucosyltransferase fut-6 (392 aa).

The Cytoplasmic segment spans residues Met1–Arg12. Residues Tyr13–Val35 traverse the membrane as a helical; Signal-anchor for type II membrane protein segment. The Lumenal segment spans residues Pro36–Leu392. N-linked (GlcNAc...) asparagine glycosylation occurs at Asn158.

Belongs to the glycosyltransferase 10 family. The cofactor is Unlike other alpha-(1,3)-fucosyltransferases, appears not to require a divalent metal cation as cofactor..

Its subcellular location is the golgi apparatus. It is found in the golgi stack membrane. It participates in protein modification; protein glycosylation. Its activity is regulated as follows. Inhibited by divalent metal cations. Involved in the fucosylation of N-glycans. Preferentially catalyzes the addition of fucose in alpha 1-3 linkage to the distal GlcNAc residue in N-glycans. Catalyzes the transfer of fucose to Gal-beta-1-4-GlcNAc-alpha-pNP (LN-pNP) and Gal-beta-1-4-GlcNAc-beta-1-3-Gal-beta-1-4-Glc (LNnT). Unlike alpha-(1,3)-fucosyltransferase fut-1, does not transfer fucose to Man-alpha-1-3-(Man-alpha-1-6)-Man-beta-1-4-GlcNAc-beta-1-4-GlcNAc-beta-1-Asn (M3), Man-alpha-1-3-(Man-alpha-1-6)-Man-beta-1-4-GlcNAc-beta-1-4-(Fuc-alpha-1-6)-GlcNAc-beta-1-Asn (M3F6) and GlcNAc-beta-1-2-Man-alpha-1-3-(GlcNAc-beta-1-2-Man-alpha-1-6)-Man-beta-1-4-GlcNAc-beta-1-4(Fuc-alpha-1-6)-GlcNAc-beta-1-Asn (GnM3F6). The chain is Alpha-(1,3)-fucosyltransferase fut-6 from Caenorhabditis elegans.